A 440-amino-acid chain; its full sequence is Ultraviolet-B receptor UVR8 (440 aa).

An N-acetylalanine modification is found at alanine 2. RCC1 repeat units follow at residues 2–31 (AEDM…VALL), 32–84 (SGDI…AYSQ), 86–137 (GMEV…AVTM), 139–189 (GEVQ…AVTE), 190–241 (DGDL…SVSY), 243–293 (GALY…ALTS), 294–345 (DGKL…AVTE), and 347–399 (NNVF…SGKS). Positions 397 to 423 (GKSWVSPAERYAVVPDETGLTDGSSKG) are required for interaction with COP1. The segment at 413–440 (ETGLTDGSSKGNGGDISVPQTDVKRVRI) is disordered.

As to quaternary structure, homodimer in the absence of UV-B, but absorption of UV-B induces monomerization of UVR8 and interaction with COP1. Interacts with RUP1, RUP2 and histone H2B.

Its subcellular location is the nucleus. The protein resides in the cytoplasm. The protein localises to the cytosol. UV-B specific signaling component that acts as a UV-B photoreceptor and plays a key role in establishing UV-protective responses in plants. Upon UV-B irradiation, UVR8 undergoes an immediate switch from homodimer to monomer, accumulates in the nucleus, interacts with the photomorphogenic repressor COP1 and regulates the expression of the transcription factor HY5 by associating with chromatin (through histone H2B binding) in the HY5 promoter region. UVR8 is involved in controlling aspects of leaf growth and morphogenesis in response to UV-B, is required for normal progression of endocycle and has a regulatory role in stomatal differentiation. Is required for plant circadian clock response to photomorphogenic UV-B light, partly through the transcriptional activation of responsive clock genes. Promotes photosynthetic efficiency at elevated levels of UV-B. Plays a role in mediating the effects of UV-B radiation on pathogen resistance by controlling the expression of the sinapate biosynthetic pathway. The two tryptophans, Trp-285 and Trp-233, serve collectively as the UV-B chromophore. This is Ultraviolet-B receptor UVR8 from Arabidopsis thaliana (Mouse-ear cress).